The primary structure comprises 290 residues: ATP synthase gamma chain (290 aa).

Belongs to the ATPase gamma chain family. In terms of assembly, F-type ATPases have 2 components, CF(1) - the catalytic core - and CF(0) - the membrane proton channel. CF(1) has five subunits: alpha(3), beta(3), gamma(1), delta(1), epsilon(1). CF(0) has three main subunits: a, b and c.

It is found in the cell membrane. In terms of biological role, produces ATP from ADP in the presence of a proton gradient across the membrane. The gamma chain is believed to be important in regulating ATPase activity and the flow of protons through the CF(0) complex. This Wolbachia pipientis subsp. Culex pipiens (strain wPip) protein is ATP synthase gamma chain.